The primary structure comprises 220 residues: Thiopurine S-methyltransferase (220 aa).

4 residues coordinate S-adenosyl-L-methionine: W10, L45, E66, and R123.

It belongs to the class I-like SAM-binding methyltransferase superfamily. TPMT family.

The protein resides in the cytoplasm. It catalyses the reaction S-adenosyl-L-methionine + a thiopurine = S-adenosyl-L-homocysteine + a thiopurine S-methylether.. The polypeptide is Thiopurine S-methyltransferase (Nitrosospira multiformis (strain ATCC 25196 / NCIMB 11849 / C 71)).